A 72-amino-acid polypeptide reads, in one-letter code: MSPRASLEKELNSARLLHATINAMDVYTQNLINELQEARDSINDLQRAHERLKLVGAKAKLQIKRDEKKPKS.

A coiled-coil region spans residues 27 to 55 (YTQNLINELQEARDSINDLQRAHERLKLV).

This is an uncharacterized protein from Schizosaccharomyces pombe (strain 972 / ATCC 24843) (Fission yeast).